Reading from the N-terminus, the 552-residue chain is Glutathione reductase, chloroplastic/mitochondrial (552 aa).

Residues 1 to 60 (MNQAMATPLSLSCCSPTLTRSTLFFTKTFPFSRSFSTPLPLSTKTLISLSPPHRTFAVRA) constitute a chloroplast and mitochondrion transit peptide. 6 residues coordinate FAD: Ser83, Gly84, Glu103, Thr120, Cys121, and Lys129. Ser83 lines the glutathione pocket. Residues Cys121 and Cys126 are joined by a disulfide bond. A glutathione-binding site is contributed by Tyr178. Residue Gly194 participates in FAD binding. Positions 254, 257, 260, 277, 283, and 341 each coordinate NADP(+). Residues Asp382 and Thr390 each contribute to the FAD site. Ala420 lines the NADP(+) pocket. Residue His515 participates in FAD binding. The active-site Proton acceptor is His515. Positions 527-552 (TPTRKVRKNQASQGKSDSKAKAVAGS) are disordered.

This sequence belongs to the class-I pyridine nucleotide-disulfide oxidoreductase family. In terms of assembly, homodimer. FAD serves as cofactor.

The protein resides in the plastid. The protein localises to the chloroplast. It localises to the mitochondrion. It carries out the reaction 2 glutathione + NADP(+) = glutathione disulfide + NADPH + H(+). Functionally, catalyzes the reduction of glutathione disulfide (GSSG) to reduced glutathione (GSH). Maintains high levels of GSH in the chloroplast. This chain is Glutathione reductase, chloroplastic/mitochondrial (GR), found in Pisum sativum (Garden pea).